Consider the following 64-residue polypeptide: Beta-defensin 13 (64 aa).

The first 22 residues, 1 to 22 (MRIFSLIVAGLVLLIQLYPAWG), serve as a signal peptide directing secretion. Cystine bridges form between Cys30/Cys57, Cys37/Cys51, and Cys41/Cys58.

The protein belongs to the beta-defensin family. As to expression, expressed in testis and to a lesser extent in epididymis (caput, corpus and cauda). Also weakly expressed in kidneys.

It localises to the secreted. Has antibacterial activity. In Mus musculus (Mouse), this protein is Beta-defensin 13 (Defb13).